Here is a 259-residue protein sequence, read N- to C-terminus: Putative hydro-lyase Bphyt_4813 (259 aa).

This sequence belongs to the D-glutamate cyclase family.

The sequence is that of Putative hydro-lyase Bphyt_4813 from Paraburkholderia phytofirmans (strain DSM 17436 / LMG 22146 / PsJN) (Burkholderia phytofirmans).